The chain runs to 615 residues: DNA mismatch repair protein MutL (615 aa).

The segment at 363-397 (FAEPAAREPVAPRYTPAPASGSRPAAPWPNAQPGY) is disordered. Low complexity predominate over residues 364–391 (AEPAAREPVAPRYTPAPASGSRPAAPWP).

Belongs to the DNA mismatch repair MutL/HexB family.

In terms of biological role, this protein is involved in the repair of mismatches in DNA. It is required for dam-dependent methyl-directed DNA mismatch repair. May act as a 'molecular matchmaker', a protein that promotes the formation of a stable complex between two or more DNA-binding proteins in an ATP-dependent manner without itself being part of a final effector complex. This chain is DNA mismatch repair protein MutL, found in Escherichia coli O8 (strain IAI1).